We begin with the raw amino-acid sequence, 325 residues long: Serine/threonine-protein kinase CtkA (325 aa).

ATP is bound by residues 21–24 (NGNK), lysine 37, glutamine 72, and 88–90 (KDF). Mg(2+) contacts are provided by asparagine 160 and aspartate 179. An ATP-binding site is contributed by aspartate 179. Residues 296–325 (QHKQAHSNPYDNADDLDNSNEYTPTPKRRR) are disordered.

Post-translationally, autophosphorylates on either Thr-3 or Thr-7.

It is found in the secreted. It localises to the host cytoplasm. Its subcellular location is the host cytosol. The protein localises to the host nucleus. The catalysed reaction is L-seryl-[protein] + ATP = O-phospho-L-seryl-[protein] + ADP + H(+). The enzyme catalyses L-threonyl-[protein] + ATP = O-phospho-L-threonyl-[protein] + ADP + H(+). Its function is as follows. Virulence factor acting as a pro-inflammatory protein that induces the secretion of the pro-inflammatory cytokines TNF-alpha (tumor necrosis factor-alpha) and IL-8 (interleukin-8) from human macrophages, as well as enhanced translocation of the transcription factor NF-kappa-B complex in macrophages. Is a kinase capable of autophosphorylating itself at a threonine residue near the N-terminus. Also leads to enhanced phosphorylation of the NF-kappa-B p65 subunit (RELA) at 'Ser-276' in human epithelial cancer cells; its kinase activity is required for this enhanced phosphorylation that up-regulates NF-kappa-B activity, but it does not directly phosphorylate this protein. Thus, the kinase activity of CtkA may play an important role in the induction of host inflammatory responses during H.pylori infection. This is Serine/threonine-protein kinase CtkA (ctkA) from Helicobacter pylori (strain J99 / ATCC 700824) (Campylobacter pylori J99).